The chain runs to 432 residues: 3-phosphoshikimate 1-carboxyvinyltransferase (432 aa).

3-phosphoshikimate-binding residues include Lys-23, Ser-24, and Arg-28. Residue Lys-23 participates in phosphoenolpyruvate binding. Residues Gly-95 and Arg-123 each coordinate phosphoenolpyruvate. Residues Ser-167, Gln-169, Asp-316, and Lys-343 each contribute to the 3-phosphoshikimate site. Gln-169 serves as a coordination point for phosphoenolpyruvate. The active-site Proton acceptor is Asp-316. The phosphoenolpyruvate site is built by Arg-347 and Arg-391.

Belongs to the EPSP synthase family. Monomer.

The protein resides in the cytoplasm. The catalysed reaction is 3-phosphoshikimate + phosphoenolpyruvate = 5-O-(1-carboxyvinyl)-3-phosphoshikimate + phosphate. Its pathway is metabolic intermediate biosynthesis; chorismate biosynthesis; chorismate from D-erythrose 4-phosphate and phosphoenolpyruvate: step 6/7. Its function is as follows. Catalyzes the transfer of the enolpyruvyl moiety of phosphoenolpyruvate (PEP) to the 5-hydroxyl of shikimate-3-phosphate (S3P) to produce enolpyruvyl shikimate-3-phosphate and inorganic phosphate. The sequence is that of 3-phosphoshikimate 1-carboxyvinyltransferase from Limosilactobacillus fermentum (strain NBRC 3956 / LMG 18251) (Lactobacillus fermentum).